A 127-amino-acid polypeptide reads, in one-letter code: Urotensin-2 (127 aa).

Positions 1–16 (MSKLFFCCLILAGSFC) are cleaved as a signal peptide. Residues 17–111 (SFRSLPIIVP…RLQSKDRKQF (95 aa)) constitute a propeptide that is removed on maturation. Cysteines 121 and 126 form a disulfide.

This sequence belongs to the urotensin-2 family. Central nervous system. Spinal cord.

It localises to the secreted. Involved in smooth muscle stimulating and ion mobilizing activities. It has a suggested role as a corticotropin-releasing factor. The polypeptide is Urotensin-2 (UTS2) (Pelophylax ridibundus (Marsh frog)).